The following is a 267-amino-acid chain: Tryptophan synthase alpha chain (267 aa).

Residues Glu49 and Asp60 each act as proton acceptor in the active site.

The protein belongs to the TrpA family. In terms of assembly, tetramer of two alpha and two beta chains.

The enzyme catalyses (1S,2R)-1-C-(indol-3-yl)glycerol 3-phosphate + L-serine = D-glyceraldehyde 3-phosphate + L-tryptophan + H2O. Its pathway is amino-acid biosynthesis; L-tryptophan biosynthesis; L-tryptophan from chorismate: step 5/5. The alpha subunit is responsible for the aldol cleavage of indoleglycerol phosphate to indole and glyceraldehyde 3-phosphate. This is Tryptophan synthase alpha chain from Acidothermus cellulolyticus (strain ATCC 43068 / DSM 8971 / 11B).